The chain runs to 1257 residues: MDQAKGYEHVRYTAPDPRDEGLGSINQRFSHDSSTNVNTYVRPPDYGVSTPARPVLNYSIQTGEEFAFEFMRDRVIMKPQFIPNVYGEHSGMPVSVNLSALGMVHPMSESGPNATVLNIEEKRQSFEHERKPPSRIEDKTYHELVQSAPVISSKNDTGQRRHSLVSSRASDSSLNRAKFLCSFGGKVIPRPRDQKLRYVGGETRIIRISKTISFQELMHKMKEIFPEARTIKYQLPGEDLDALVSVSSDEDLQNMMEECIVFGNGGSEKPRMFLFSSSDIEEAQFVMEHAEGDSEVQYVVAVNGMDLSSRRSSLGLSPPGNNLDELLHGNFDRKIDRAATEPAVASLTPLAGNESLPASQTSQPVTGFSTGNEPFSQPYLGQQLQFPGLGNHQIYTSGHMASIGYIDEKRSAPLHVQPQPHYIPYSVNPETPLESLVPHYPQKPEQGFLREEQIFHVQDPETSSKEAKMRRDDSFQKVNDHPISTVESNLSAKEPKMRRESSTPRVNEYPVSSMPSDLIVPDDLPKEEAPIVTQTSSSTPDPSSSTLSEKSLRKSEDHVENNLSAKEPKMRKEHSTTRVNEYSVSSVSSDSMVPDQALKEEAPISMKISNSTPDPKSLVYPEKSLRTSQEKTGAFDTTNEGMKKNQDNQFCLLGGFSVSGHGTSNNSSSNVSNFDQPVTQQRVFHSERTVRDPTETNRLSKSDDSLASQFVMAQTTSDAFLPISESSETSHEANMESQNVHPTAPVIPAPDSIWTAEGSMSQSEKKNVETNTPEHVSQTETSAKAVPQGHNEKGDIVVDINDRFPREFLADILKTKESLNFPGLGPLHADGAGVSLNIQNNDPKTWSYFRNLAQDEFERKDLSLMDQDHPGFPTSMTNTNGVPIDYSYPPLQSEKVASSQIHPQIHFDGNIKPDVSTITIPDLNTVDTQEDYSQSQIKGAESTDATLNAGVPLIDFMAADSGMRSLQVIKNDDLEELKELGSGTFGTVYHGKWRGTDVAIKRIKRSCFIGRSSEQERLTSEFWHEAEILSKLHHPNVMAFYGVVKDGPGGTLATVTEYMVNGSLRHVLLSNRHLDRRKRLIIAMDAAFGMEYLHSKSIVHFDLKCDNLLVNLKDPARPICKVGDFGLSKIKRNTLVTGGVRGTLPWMAPELLSGSSSKVSEKVDVFSFGIVLWEILTGEEPYANMHYGAIIGGIVNNTLRPTVPNYCDPEWRMLMEQCWAPDPFVRPAFPEIARRLRTMSSSAVHTKPHAVNHQIHK.

A disordered region spans residues 1–21 (MDQAKGYEHVRYTAPDPRDEG). The region spanning 191-277 (PRDQKLRYVG…EKPRMFLFSS (87 aa)) is the PB1 domain. Composition is skewed to basic and acidic residues over residues 457–480 (VQDPETSSKEAKMRRDDSFQKVND) and 493–502 (KEPKMRRESS). 2 disordered regions span residues 457 to 629 (VQDP…RTSQ) and 761 to 789 (SQSEKKNVETNTPEHVSQTETSAKAVPQG). Residue serine 474 is modified to Phosphoserine. Residues 533-548 (TQTSSSTPDPSSSTLS) show a composition bias toward low complexity. Basic and acidic residues predominate over residues 550–576 (KSLRKSEDHVENNLSAKEPKMRKEHST). A Phosphoserine modification is found at serine 555. Low complexity predominate over residues 583 to 593 (SVSSVSSDSMV). Over residues 769–782 (ETNTPEHVSQTETS) the composition is skewed to polar residues. Serine 777 carries the phosphoserine modification. The Protein kinase domain maps to 974–1239 (LEELKELGSG…PEIARRLRTM (266 aa)). ATP is bound by residues 980–988 (LGSGTFGTV) and lysine 1001. Serine 1013 carries the phosphoserine modification. Aspartate 1102 (proton acceptor) is an active-site residue.

The protein belongs to the protein kinase superfamily. Ser/Thr protein kinase family. Post-translationally, hyperphosphorylated in response to auxin in an ABP1- and TMK1-dependent manner.

Its subcellular location is the cytoplasm. The catalysed reaction is L-seryl-[protein] + ATP = O-phospho-L-seryl-[protein] + ADP + H(+). The enzyme catalyses L-threonyl-[protein] + ATP = O-phospho-L-threonyl-[protein] + ADP + H(+). Its activity is regulated as follows. Activated by auxin via rapid phosphorylation downstream of ABP1 and TMK1 signaling. Functionally, RAF-like protein kinase acting, together with RAF20, as a central mediator of a fast response pathway to auxin involving proteins phosphorylation, and leading to rapid cellular responses including membrane depolarization and cytoplasmic streaming. Required for general growth and developmental process. The chain is RAF-like serine/threonine-protein kinase 24 from Arabidopsis thaliana (Mouse-ear cress).